A 233-amino-acid polypeptide reads, in one-letter code: Pyridoxal phosphate homeostasis protein (233 aa).

Lys35 carries the post-translational modification N6-(pyridoxal phosphate)lysine.

The protein belongs to the pyridoxal phosphate-binding protein YggS/PROSC family.

Its function is as follows. Pyridoxal 5'-phosphate (PLP)-binding protein, which is involved in PLP homeostasis. This chain is Pyridoxal phosphate homeostasis protein, found in Pasteurella multocida (strain Pm70).